A 154-amino-acid polypeptide reads, in one-letter code: Ribosome maturation factor RimP (154 aa).

It belongs to the RimP family.

It is found in the cytoplasm. Its function is as follows. Required for maturation of 30S ribosomal subunits. This chain is Ribosome maturation factor RimP, found in Salmonella gallinarum (strain 287/91 / NCTC 13346).